An 89-amino-acid chain; its full sequence is DNA/RNA-binding protein Alba 1 (89 aa).

This sequence belongs to the histone-like Alba family.

It is found in the cytoplasm. Its subcellular location is the chromosome. Its function is as follows. Binds double-stranded DNA tightly but without sequence specificity. Involved in DNA compaction. The sequence is that of DNA/RNA-binding protein Alba 1 from Archaeoglobus fulgidus (strain ATCC 49558 / DSM 4304 / JCM 9628 / NBRC 100126 / VC-16).